The chain runs to 117 residues: Immunoglobulin lambda variable 1-44 (117 aa).

Residues 1–19 (MASFPLLLTLLTHCAGSWA) form the signal peptide. Glutamine 20 is modified (pyrrolidone carboxylic acid). The segment at 20-44 (QSVLTQPPSASGTPGQRVTISCSGS) is framework-1. Residues 20–117 (QSVLTQPPSA…CAAWDDSLNG (98 aa)) enclose the Ig-like domain. Residues 24 to 35 (TQPPSASGTPGQ) show a composition bias toward polar residues. A disordered region spans residues 24–45 (TQPPSASGTPGQRVTISCSGSS). Cysteine 41 and cysteine 108 are oxidised to a cystine. The interval 45–52 (SSNIGSNT) is complementarity-determining-1. Positions 53–69 (VNWYQQLPGTAPKLLIY) are framework-2. Residues 70–72 (SNN) are complementarity-determining-2. Residues 73-108 (QRPSGVPDRFSGSKSGTSASLAISGLQSEDEADYYC) form a framework-3 region. The tract at residues 109–117 (AAWDDSLNG) is complementarity-determining-3.

Immunoglobulins are composed of two identical heavy chains and two identical light chains; disulfide-linked.

It localises to the secreted. Its subcellular location is the cell membrane. Functionally, v region of the variable domain of immunoglobulin light chains that participates in the antigen recognition. Immunoglobulins, also known as antibodies, are membrane-bound or secreted glycoproteins produced by B lymphocytes. In the recognition phase of humoral immunity, the membrane-bound immunoglobulins serve as receptors which, upon binding of a specific antigen, trigger the clonal expansion and differentiation of B lymphocytes into immunoglobulins-secreting plasma cells. Secreted immunoglobulins mediate the effector phase of humoral immunity, which results in the elimination of bound antigens. The antigen binding site is formed by the variable domain of one heavy chain, together with that of its associated light chain. Thus, each immunoglobulin has two antigen binding sites with remarkable affinity for a particular antigen. The variable domains are assembled by a process called V-(D)-J rearrangement and can then be subjected to somatic hypermutations which, after exposure to antigen and selection, allow affinity maturation for a particular antigen. The protein is Immunoglobulin lambda variable 1-44 of Homo sapiens (Human).